The chain runs to 291 residues: Stomatin-like protein 3 (291 aa).

Residue Ser7 is modified to Phosphoserine. A helical; Signal-anchor for type III membrane protein membrane pass occupies residues 29–49 (WILFSLSFLLVIITFPISIWM). Residues 50-291 (CLKIIKEYER…DNHKKLPNKA (242 aa)) lie on the Cytoplasmic side of the membrane. Ser241 is modified (phosphoserine).

It belongs to the band 7/mec-2 family. As to quaternary structure, homodimer. Interacts with PIEZO1 and PIEZO2.

The protein resides in the cell membrane. Functionally, required for the function of many mechanoreceptors. Modulate mechanotransduction channels and acid-sensing ion channels (ASIC) proteins. Potentiates PIEZO1 and PIEZO2 function by increasing their sensitivity to mechanical stimulations. The sequence is that of Stomatin-like protein 3 (STOML3) from Homo sapiens (Human).